The chain runs to 78 residues: Pigment-dispersing hormone 1 peptides (78 aa).

Residues 1 to 22 form the signal peptide; that stretch reads MRSSVIVAVLVVVALAALLTQG. Alanine amide is present on alanine 75.

This sequence belongs to the arthropod PDH family. In terms of tissue distribution, eyestalk sinus gland.

The protein localises to the secreted. Its function is as follows. The pigment-dispersing hormone causes the migration of the distal retinal pigment into the proximal end of the pigment chromatophore cells and thus decreases the amount of light entering the retinulas. May also function as a neurotransmitter and/or neuromodulator. The polypeptide is Pigment-dispersing hormone 1 peptides (PDH1) (Callinectes sapidus (Blue crab)).